The chain runs to 436 residues: ATP-dependent protease ATPase subunit HslU (436 aa).

Residues Ile18, Gly60–Glu65, Asp249, Glu314, and Arg386 each bind ATP.

The protein belongs to the ClpX chaperone family. HslU subfamily. As to quaternary structure, a double ring-shaped homohexamer of HslV is capped on each side by a ring-shaped HslU homohexamer. The assembly of the HslU/HslV complex is dependent on binding of ATP.

It localises to the cytoplasm. In terms of biological role, ATPase subunit of a proteasome-like degradation complex; this subunit has chaperone activity. The binding of ATP and its subsequent hydrolysis by HslU are essential for unfolding of protein substrates subsequently hydrolyzed by HslV. HslU recognizes the N-terminal part of its protein substrates and unfolds these before they are guided to HslV for hydrolysis. The sequence is that of ATP-dependent protease ATPase subunit HslU from Chelativorans sp. (strain BNC1).